The chain runs to 215 residues: 3-isopropylmalate dehydratase small subunit (215 aa).

The protein belongs to the LeuD family. LeuD type 1 subfamily. In terms of assembly, heterodimer of LeuC and LeuD.

The enzyme catalyses (2R,3S)-3-isopropylmalate = (2S)-2-isopropylmalate. It participates in amino-acid biosynthesis; L-leucine biosynthesis; L-leucine from 3-methyl-2-oxobutanoate: step 2/4. Functionally, catalyzes the isomerization between 2-isopropylmalate and 3-isopropylmalate, via the formation of 2-isopropylmaleate. The sequence is that of 3-isopropylmalate dehydratase small subunit from Teredinibacter turnerae (strain ATCC 39867 / T7901).